The chain runs to 355 residues: Phosphoribosylformylglycinamidine cyclo-ligase (355 aa).

It belongs to the AIR synthase family.

It localises to the cytoplasm. It catalyses the reaction 2-formamido-N(1)-(5-O-phospho-beta-D-ribosyl)acetamidine + ATP = 5-amino-1-(5-phospho-beta-D-ribosyl)imidazole + ADP + phosphate + H(+). The protein operates within purine metabolism; IMP biosynthesis via de novo pathway; 5-amino-1-(5-phospho-D-ribosyl)imidazole from N(2)-formyl-N(1)-(5-phospho-D-ribosyl)glycinamide: step 2/2. The chain is Phosphoribosylformylglycinamidine cyclo-ligase from Methylobacterium sp. (strain 4-46).